We begin with the raw amino-acid sequence, 318 residues long: GTP 3',8-cyclase (318 aa).

The Radical SAM core domain occupies 5–217 (KFERKIDYIR…DKIAKKYKFK (213 aa)). A GTP-binding site is contributed by arginine 14. [4Fe-4S] cluster is bound by residues cysteine 21 and cysteine 25. S-adenosyl-L-methionine is bound at residue tyrosine 27. A [4Fe-4S] cluster-binding site is contributed by cysteine 28. Position 64 (arginine 64) interacts with GTP. Glycine 68 is a binding site for S-adenosyl-L-methionine. Threonine 95 provides a ligand contact to GTP. An S-adenosyl-L-methionine-binding site is contributed by serine 119. Lysine 155 serves as a coordination point for GTP. Residue methionine 189 participates in S-adenosyl-L-methionine binding. Residues cysteine 248 and cysteine 251 each contribute to the [4Fe-4S] cluster site. GTP is bound at residue 253-255 (RIR). Cysteine 265 is a [4Fe-4S] cluster binding site.

The protein belongs to the radical SAM superfamily. MoaA family. In terms of assembly, monomer and homodimer. [4Fe-4S] cluster is required as a cofactor.

The enzyme catalyses GTP + AH2 + S-adenosyl-L-methionine = (8S)-3',8-cyclo-7,8-dihydroguanosine 5'-triphosphate + 5'-deoxyadenosine + L-methionine + A + H(+). It participates in cofactor biosynthesis; molybdopterin biosynthesis. Functionally, catalyzes the cyclization of GTP to (8S)-3',8-cyclo-7,8-dihydroguanosine 5'-triphosphate. This chain is GTP 3',8-cyclase, found in Nautilia profundicola (strain ATCC BAA-1463 / DSM 18972 / AmH).